Consider the following 264-residue polypeptide: 3-methyl-2-oxobutanoate hydroxymethyltransferase (264 aa).

Residues aspartate 45 and aspartate 84 each contribute to the Mg(2+) site. 3-methyl-2-oxobutanoate is bound by residues 45–46, aspartate 84, and lysine 112; that span reads DS. Glutamate 114 lines the Mg(2+) pocket. Catalysis depends on glutamate 181, which acts as the Proton acceptor.

This sequence belongs to the PanB family. Homodecamer; pentamer of dimers. It depends on Mg(2+) as a cofactor.

Its subcellular location is the cytoplasm. It carries out the reaction 3-methyl-2-oxobutanoate + (6R)-5,10-methylene-5,6,7,8-tetrahydrofolate + H2O = 2-dehydropantoate + (6S)-5,6,7,8-tetrahydrofolate. The protein operates within cofactor biosynthesis; (R)-pantothenate biosynthesis; (R)-pantoate from 3-methyl-2-oxobutanoate: step 1/2. Functionally, catalyzes the reversible reaction in which hydroxymethyl group from 5,10-methylenetetrahydrofolate is transferred onto alpha-ketoisovalerate to form ketopantoate. The polypeptide is 3-methyl-2-oxobutanoate hydroxymethyltransferase (Escherichia coli O157:H7).